The following is a 126-amino-acid chain: Large ribosomal subunit protein bL12 (126 aa).

The protein belongs to the bacterial ribosomal protein bL12 family. Homodimer. Part of the ribosomal stalk of the 50S ribosomal subunit. Forms a multimeric L10(L12)X complex, where L10 forms an elongated spine to which 2 to 4 L12 dimers bind in a sequential fashion. Binds GTP-bound translation factors.

Functionally, forms part of the ribosomal stalk which helps the ribosome interact with GTP-bound translation factors. Is thus essential for accurate translation. This is Large ribosomal subunit protein bL12 from Methylorubrum populi (strain ATCC BAA-705 / NCIMB 13946 / BJ001) (Methylobacterium populi).